Consider the following 590-residue polypeptide: DNA primase (590 aa).

The segment at 37-61 adopts a CHC2-type zinc-finger fold; sequence CPFHKEKTPSFSVSPTKQFYHCFSC. The 83-residue stretch at 255 to 337 folds into the Toprim domain; sequence GRILVVEGYM…DKSLHFLFLP (83 aa). Residues Glu261, Asp305, and Asp307 each coordinate Mg(2+).

This sequence belongs to the DnaG primase family. In terms of assembly, monomer. Interacts with DnaB. The cofactor is Zn(2+). Mg(2+) serves as cofactor.

It catalyses the reaction ssDNA + n NTP = ssDNA/pppN(pN)n-1 hybrid + (n-1) diphosphate.. RNA polymerase that catalyzes the synthesis of short RNA molecules used as primers for DNA polymerase during DNA replication. The protein is DNA primase of Neisseria meningitidis serogroup A / serotype 4A (strain DSM 15465 / Z2491).